Consider the following 303-residue polypeptide: 2-dehydropantoate 2-reductase (303 aa).

NADP(+) is bound by residues 7 to 12 (GCGALG), Asn98, and Ala122. Asn98 lines the substrate pocket. Lys176 acts as the Proton donor in catalysis. The substrate site is built by Asn180, Asn184, Asn194, and Ser244. Residue Glu256 participates in NADP(+) binding.

It belongs to the ketopantoate reductase family. Monomer.

It is found in the cytoplasm. The enzyme catalyses (R)-pantoate + NADP(+) = 2-dehydropantoate + NADPH + H(+). The protein operates within cofactor biosynthesis; (R)-pantothenate biosynthesis; (R)-pantoate from 3-methyl-2-oxobutanoate: step 2/2. In terms of biological role, catalyzes the NADPH-dependent reduction of ketopantoate into pantoic acid. The chain is 2-dehydropantoate 2-reductase (panE) from Escherichia coli O157:H7.